A 190-amino-acid chain; its full sequence is Guanylate kinase (190 aa).

The Guanylate kinase-like domain occupies 3–185; the sequence is NYIFIISAPS…SLEQLCKYFE (183 aa). 10-17 contributes to the ATP binding site; that stretch reads APSGAGKS.

This sequence belongs to the guanylate kinase family.

The protein resides in the cytoplasm. The enzyme catalyses GMP + ATP = GDP + ADP. Functionally, essential for recycling GMP and indirectly, cGMP. This chain is Guanylate kinase, found in Francisella tularensis subsp. holarctica (strain OSU18).